The primary structure comprises 236 residues: Small ribosomal subunit protein uS2c (236 aa).

It belongs to the universal ribosomal protein uS2 family.

It localises to the plastid. The protein localises to the chloroplast. This is Small ribosomal subunit protein uS2c (rps2) from Citrus sinensis (Sweet orange).